Consider the following 213-residue polypeptide: ATP phosphoribosyltransferase (213 aa).

This sequence belongs to the ATP phosphoribosyltransferase family. Short subfamily. As to quaternary structure, heteromultimer composed of HisG and HisZ subunits.

It localises to the cytoplasm. It catalyses the reaction 1-(5-phospho-beta-D-ribosyl)-ATP + diphosphate = 5-phospho-alpha-D-ribose 1-diphosphate + ATP. It functions in the pathway amino-acid biosynthesis; L-histidine biosynthesis; L-histidine from 5-phospho-alpha-D-ribose 1-diphosphate: step 1/9. Functionally, catalyzes the condensation of ATP and 5-phosphoribose 1-diphosphate to form N'-(5'-phosphoribosyl)-ATP (PR-ATP). Has a crucial role in the pathway because the rate of histidine biosynthesis seems to be controlled primarily by regulation of HisG enzymatic activity. The polypeptide is ATP phosphoribosyltransferase (Saccharophagus degradans (strain 2-40 / ATCC 43961 / DSM 17024)).